A 489-amino-acid polypeptide reads, in one-letter code: Cytochrome P450 2C70 (489 aa).

The N-terminal stretch at 1 to 27 is a signal peptide; it reads MALFIFLGIWLSCFLFLFLWNQHRGRG. Cys-434 is a heme binding site.

This sequence belongs to the cytochrome P450 family. It depends on heme as a cofactor. In terms of tissue distribution, expressed in liver.

Its subcellular location is the endoplasmic reticulum membrane. It localises to the microsome membrane. It catalyses the reaction chenodeoxycholate + reduced [NADPH--hemoprotein reductase] + O2 = alpha-muricholate + oxidized [NADPH--hemoprotein reductase] + H2O + H(+). It carries out the reaction ursodeoxycholate + reduced [NADPH--hemoprotein reductase] + O2 = beta-muricholate + oxidized [NADPH--hemoprotein reductase] + H2O + H(+). Its function is as follows. A cytochrome P450 monooxygenase involved in muricholic acid (MCA) synthesis. Hydroxylates at the 6-beta position two major bile acids, chenodeoxycholic acid (CDCA) and ursodeoxycholic acid (UDCA) to form alpha-MCA and beta-MCA, respectively. May regulate NR1H4/farnesoid X receptor signaling, as taurine-conjugated MCAs are antagonists of NR1H4. Mechanistically, uses molecular oxygen inserting one oxygen atom into a substrate, and reducing the second into a water molecule, with two electrons provided by NADPH via cytochrome P450 reductase (CPR; NADPH-ferrihemoprotein reductase). This chain is Cytochrome P450 2C70, found in Mus musculus (Mouse).